A 282-amino-acid chain; its full sequence is Nucleotide-binding protein in ptsN-ptsO intergenic region (282 aa).

8-15 is an ATP binding site; it reads GRSGSGKS. 56 to 59 is a GTP binding site; it reads DVRN.

The protein belongs to the RapZ-like family.

In terms of biological role, displays ATPase and GTPase activities. This is Nucleotide-binding protein in ptsN-ptsO intergenic region from Shewanella violacea.